The primary structure comprises 281 residues: Bifunctional protein FolD (281 aa).

NADP(+) contacts are provided by residues 164–166 (GRS) and Ser-189.

It belongs to the tetrahydrofolate dehydrogenase/cyclohydrolase family. As to quaternary structure, homodimer.

It catalyses the reaction (6R)-5,10-methylene-5,6,7,8-tetrahydrofolate + NADP(+) = (6R)-5,10-methenyltetrahydrofolate + NADPH. The catalysed reaction is (6R)-5,10-methenyltetrahydrofolate + H2O = (6R)-10-formyltetrahydrofolate + H(+). The protein operates within one-carbon metabolism; tetrahydrofolate interconversion. Functionally, catalyzes the oxidation of 5,10-methylenetetrahydrofolate to 5,10-methenyltetrahydrofolate and then the hydrolysis of 5,10-methenyltetrahydrofolate to 10-formyltetrahydrofolate. In Enterococcus faecalis (strain ATCC 700802 / V583), this protein is Bifunctional protein FolD.